Here is a 1216-residue protein sequence, read N- to C-terminus: AF4/FMR2 family member 1 (1216 aa).

6 disordered regions span residues 1-52, 68-104, 116-139, 152-217, 244-275, and 352-728; these read MAAH…KGDE, KEFLSSKSHPHRLDGSEDRPGKPRYPLGHDRGNGAAS, IHTSAPGSRPVGNISHSPKMAQPR, PRLT…VSSK, AVTSLGSAPPQPPCQTFPPPPLPSKSAAMQQK, and SWPP…RTSG. Basic and acidic residues-rich tracts occupy residues 9 to 35 and 78 to 99; these read NEDRNLLRIREKERRNQEAHQEKEAFP and HRLDGSEDRPGKPRYPLGHDRG. Over residues 166–182 the composition is skewed to basic and acidic residues; the sequence is RKCDRRAEGDSAPERKL. Ser183, Ser191, and Ser197 each carry phosphoserine. A compositionally biased stretch (low complexity) spans 207-217; sequence SKAHSSGVSSK. Pro residues predominate over residues 252–266; that stretch reads PPQPPCQTFPPPPLP. Positions 383–406 are enriched in polar residues; the sequence is PATQSQKQYDTPSKTHPNPQQGTS. A compositionally biased stretch (acidic residues) spans 408–424; the sequence is LEDDLQLSDSEDSDTEQ. A compositionally biased stretch (pro residues) spans 429-438; the sequence is PPSPPAPPSA. Acidic residues predominate over residues 457 to 484; that stretch reads ESSESDSSSDSESESSSSDSEEEEENEP. Lys682 carries the N6-acetyllysine modification. Positions 710–728 are enriched in low complexity; that stretch reads SQGPSHSSRGSSGSVRTSG. Phosphoserine occurs at positions 755 and 760. Disordered stretches follow at residues 777 to 969 and 1094 to 1125; these read RIPQ…RQQA and APSPCTARSTGVPSPLSPMPSPASSVGSQSSA. Residues 789 to 808 are compositionally biased toward basic and acidic residues; the sequence is RKAEDKQLSAGKKQDSETKS. Low complexity-rich tracts occupy residues 824 to 846, 867 to 886, 902 to 915, and 1115 to 1125; these read KKSTVTRDTNWISRRASSSSSHT, PPASASSVSSSSSSQKPSRP, PPRSASSTKSSSTD, and PASSVGSQSSA.

The protein belongs to the AF4 family. In terms of assembly, component of the super elongation complex (SEC), at least composed of EAF1, EAF2, CDK9, MLLT3/AF9, AFF (AFF1 or AFF4), the P-TEFb complex and ELL (ELL, ELL2 or ELL3).

It is found in the nucleus. The polypeptide is AF4/FMR2 family member 1 (Aff1) (Mus musculus (Mouse)).